A 134-amino-acid chain; its full sequence is Cytochrome b (134 aa).

Transmembrane regions (helical) follow at residues 33–53 (FGSL…FLAM), 77–98 (WLIR…FLHV), and 113–133 (WNIG…GYVL). Heme b-binding residues include H83 and H97.

This sequence belongs to the cytochrome b family. In terms of assembly, the cytochrome bc1 complex contains 11 subunits: 3 respiratory subunits (MT-CYB, CYC1 and UQCRFS1), 2 core proteins (UQCRC1 and UQCRC2) and 6 low-molecular weight proteins (UQCRH/QCR6, UQCRB/QCR7, UQCRQ/QCR8, UQCR10/QCR9, UQCR11/QCR10 and a cleavage product of UQCRFS1). This cytochrome bc1 complex then forms a dimer. Requires heme b as cofactor.

It localises to the mitochondrion inner membrane. Functionally, component of the ubiquinol-cytochrome c reductase complex (complex III or cytochrome b-c1 complex) that is part of the mitochondrial respiratory chain. The b-c1 complex mediates electron transfer from ubiquinol to cytochrome c. Contributes to the generation of a proton gradient across the mitochondrial membrane that is then used for ATP synthesis. The protein is Cytochrome b (MT-CYB) of Sorex shinto sadonis (Sado shrew).